A 376-amino-acid polypeptide reads, in one-letter code: Protein RecA (376 aa).

Position 65-72 (65-72) interacts with ATP; sequence GPESSGKT. The interval 316–376 is disordered; sequence EHDEIFTSVR…GDDLSDDDIY (61 aa). The segment covering 331–350 has biased composition (basic and acidic residues); sequence GEKKDSDEDPGDNKKSKDSA. Residues 366–376 are compositionally biased toward acidic residues; that stretch reads PGDDLSDDDIY.

It belongs to the RecA family.

Its subcellular location is the cytoplasm. Can catalyze the hydrolysis of ATP in the presence of single-stranded DNA, the ATP-dependent uptake of single-stranded DNA by duplex DNA, and the ATP-dependent hybridization of homologous single-stranded DNAs. It interacts with LexA causing its activation and leading to its autocatalytic cleavage. The chain is Protein RecA from Oenococcus oeni (strain ATCC BAA-331 / PSU-1).